A 511-amino-acid chain; its full sequence is Cytochrome P450 monooxygenase PUL2 (511 aa).

A helical membrane pass occupies residues 14-34 (WMAFVYFTPVLFVVLYLLKEW). Residues N116, N141, and N442 are each glycosylated (N-linked (GlcNAc...) asparagine). C462 contributes to the heme binding site.

The protein belongs to the cytochrome P450 family. Heme is required as a cofactor.

It localises to the membrane. The protein operates within siderophore biosynthesis. Functionally, cytochrome P450 monooxygenase; part of the PUL gene cluster that mediates the formation of pulcherrimin, a red iron-containing pigment composed of two cyclized and modified leucine molecules that acts as a siderophore, a chelator that binds iron outside the cell for subsequent uptake. Two leucine molecules are cyclized via a cyclodipeptide synthase, and the resulting diketopiperazine is oxidized by a cytochrome P450 monooxygenase to generate pulcherriminic acid (PA), which can then spontaneously bind iron to form pulcherrimin. The probable cyclodipeptide synthase PUL1 and the cytochrome P450 monooxygenase PUL2 encode the enzymes responsible for the two-step pulcherrimin biosynthesis pathway. In Kluyveromyces lactis (strain ATCC 8585 / CBS 2359 / DSM 70799 / NBRC 1267 / NRRL Y-1140 / WM37) (Yeast), this protein is Cytochrome P450 monooxygenase PUL2.